A 125-amino-acid chain; its full sequence is MIQALLVAVGGAIGSLLRYYVGQWTLRLMGPAFPWGTLAVNVVGCFVIGVFAELIARRFNASVELRLLLITGFLGGFTTFSAFSLDAISLFERGEAVAGGIYTVASVGLSMAAVMAGLAVMRALA.

Transmembrane regions (helical) follow at residues 1–21, 32–52, 68–88, and 101–121; these read MIQALLVAVGGAIGSLLRYYV, AFPWGTLAVNVVGCFVIGVFA, LLITGFLGGFTTFSAFSLDAI, and IYTVASVGLSMAAVMAGLAVM. Na(+) is bound by residues glycine 75 and threonine 78.

It belongs to the fluoride channel Fluc/FEX (TC 1.A.43) family.

It is found in the cell inner membrane. It carries out the reaction fluoride(in) = fluoride(out). Its activity is regulated as follows. Na(+) is not transported, but it plays an essential structural role and its presence is essential for fluoride channel function. Its function is as follows. Fluoride-specific ion channel. Important for reducing fluoride concentration in the cell, thus reducing its toxicity. The protein is Fluoride-specific ion channel FluC of Rhizobium leguminosarum bv. trifolii (strain WSM2304).